We begin with the raw amino-acid sequence, 494 residues long: Probable 26S proteasome non-ATPase regulatory subunit 3 (494 aa).

Residues Ala247–Asp426 enclose the PCI domain. Residues Pro458–Phe494 form a disordered region. Over residues Tyr462 to Met486 the composition is skewed to basic and acidic residues.

The protein belongs to the proteasome subunit S3 family. In terms of assembly, the 26S proteasome is composed of a core protease, known as the 20S proteasome, capped at one or both ends by the 19S regulatory complex (RC). The RC is composed of at least 18 different subunits in two subcomplexes, the base and the lid, which form the portions proximal and distal to the 20S proteolytic core, respectively. As to expression, blood (crystal) cells and cuticle.

In terms of biological role, acts as a regulatory subunit of the 26 proteasome which is involved in the ATP-dependent degradation of ubiquitinated proteins. The polypeptide is Probable 26S proteasome non-ATPase regulatory subunit 3 (Rpn3) (Drosophila melanogaster (Fruit fly)).